Here is a 502-residue protein sequence, read N- to C-terminus: Arabinose import ATP-binding protein AraG (502 aa).

ABC transporter domains are found at residues 6 to 241 (LEFD…MVGR) and 252 to 497 (REVG…MVES). 38-45 (GENGAGKS) serves as a coordination point for ATP.

Belongs to the ABC transporter superfamily. Arabinose importer (TC 3.A.1.2.2) family. As to quaternary structure, the complex is composed of two ATP-binding proteins (AraG), two transmembrane proteins (AraH) and a solute-binding protein (AraF).

It is found in the cell inner membrane. It carries out the reaction L-arabinose(out) + ATP + H2O = L-arabinose(in) + ADP + phosphate + H(+). Functionally, part of the ABC transporter complex AraFGH involved in arabinose import. Responsible for energy coupling to the transport system. The polypeptide is Arabinose import ATP-binding protein AraG (Mannheimia succiniciproducens (strain KCTC 0769BP / MBEL55E)).